Reading from the N-terminus, the 345-residue chain is Phosphoribosylformylglycinamidine cyclo-ligase (345 aa).

This sequence belongs to the AIR synthase family.

The protein resides in the cytoplasm. The enzyme catalyses 2-formamido-N(1)-(5-O-phospho-beta-D-ribosyl)acetamidine + ATP = 5-amino-1-(5-phospho-beta-D-ribosyl)imidazole + ADP + phosphate + H(+). It participates in purine metabolism; IMP biosynthesis via de novo pathway; 5-amino-1-(5-phospho-D-ribosyl)imidazole from N(2)-formyl-N(1)-(5-phospho-D-ribosyl)glycinamide: step 2/2. This is Phosphoribosylformylglycinamidine cyclo-ligase from Escherichia coli O45:K1 (strain S88 / ExPEC).